A 266-amino-acid chain; its full sequence is Large ribosomal subunit protein eL8 (266 aa).

Positions 1–11 (MPKGKKAKGKK) are enriched in basic residues. Disordered regions lie at residues 1 to 28 (MPKG…KKVV) and 105 to 134 (ETKQ…KRPP). Over residues 116-130 (ARAEQKAAGKGDAPT) the composition is skewed to basic and acidic residues.

Belongs to the eukaryotic ribosomal protein eL8 family. Component of the large ribosomal subunit.

Its subcellular location is the cytoplasm. In terms of biological role, component of the large ribosomal subunit. The ribosome is a large ribonucleoprotein complex responsible for the synthesis of proteins in the cell. The polypeptide is Large ribosomal subunit protein eL8 (rpl7a) (Takifugu rubripes (Japanese pufferfish)).